Reading from the N-terminus, the 208-residue chain is Large ribosomal subunit protein bL9 (208 aa).

The interval 161–208 is disordered; sequence KKRKIEKEVEEGSGTSVDESLKLDSVSDSIDTSGVNSSDKEEENNIIE. Residues 186–197 show a composition bias toward polar residues; the sequence is VSDSIDTSGVNS.

It belongs to the bacterial ribosomal protein bL9 family.

In terms of biological role, binds to the 23S rRNA. The polypeptide is Large ribosomal subunit protein bL9 (Ehrlichia canis (strain Jake)).